The primary structure comprises 411 residues: Phosphoglycerate kinase (411 aa).

Substrate-binding positions include 19–21 (DLN), R34, 57–60 (HQSR), R114, and R154. Residues E332 and 358-361 (GGHS) contribute to the ATP site.

This sequence belongs to the phosphoglycerate kinase family. In terms of assembly, monomer.

Its subcellular location is the cytoplasm. It carries out the reaction (2R)-3-phosphoglycerate + ATP = (2R)-3-phospho-glyceroyl phosphate + ADP. The protein operates within carbohydrate degradation; glycolysis; pyruvate from D-glyceraldehyde 3-phosphate: step 2/5. The chain is Phosphoglycerate kinase from Thermococcus kodakarensis (strain ATCC BAA-918 / JCM 12380 / KOD1) (Pyrococcus kodakaraensis (strain KOD1)).